The sequence spans 84 residues: Dolichol phosphate-mannose biosynthesis regulatory protein (84 aa).

The next 2 helical transmembrane spans lie at 11-31 (LGLVAVSLIIFTYYTAWVILL) and 49-69 (YAVAIPLAAGLLLLLFVGLFI).

It belongs to the DPM2 family. Component of the dolichol-phosphate mannose (DPM) synthase complex composed of DPM1, DPM2 and DPM3; in the complex interacts directly with DPM3. Component of the glycosylphosphatidylinositol-N-acetylglucosaminyltransferase (GPI-GnT) complex composed at least by PIGA, PIGC, PIGH, PIGP, PIGQ, PIGY and DPM2. Interacts with PIGA, PIGC and PIGQ.

The protein localises to the endoplasmic reticulum membrane. Its pathway is protein modification; protein glycosylation. Functionally, regulates the biosynthesis of dolichol phosphate-mannose. Regulatory subunit of the dolichol-phosphate mannose (DPM) synthase complex; essential for the ER localization and stable expression of DPM1. Part of the glycosylphosphatidylinositol-N-acetylglucosaminyltransferase (GPI-GnT) complex that catalyzes the transfer of N-acetylglucosamine from UDP-N-acetylglucosamine to phosphatidylinositol and participates in the first step of GPI biosynthesis. May act by regulating the GPI-GNT complex. The polypeptide is Dolichol phosphate-mannose biosynthesis regulatory protein (Homo sapiens (Human)).